Consider the following 582-residue polypeptide: MGLRHLVLCPGSRSGPLALAAGGMARTNLLRLSTAIDERSAAFLALGFSTATGTAAAVVTTSGTAVANLLPAAVEADRSCQPLLLLTADRPYRLKDCGANQTVNQETFLSPACRWIGQGPREGLHLFSTETLESFAEEAWQRAHHPAGAVHLNLPFEEPLHLSEEEQRVIWKGWSPKIPRSAPITPTNLAMAAEGTEGVTDRAPFALDPFRPGVVIAGAWRGLSKDLFAFQQSLREWQALSGWPVLADPLSALPSDQPGLIRSWELLLAAGLLGSHEQLQVLRLGPMSASRSLEAWLKSFGDGQLLITEGDSRCLDPLGLSVQWSHGLTTWWQHHHHRWIDADAASQQATQPLLKKWQIIDRFAQDWLDQQLPLQGAITEPALARWLSRLLPAELSIMLAASSPVRDWLAYADKSLFSRRCFSFRGASGIDGTLSLSMGLAMALGPTLLVSGDLALLHDSNGWLLAHPQRPPLVVVLIDNGGGGIFEQLLVKKAPSEAFEQLFAMPQAVDPLVLAAAHNIPHRQVACLEDLPAALEWGLFQTGPVLIRVCTHRGQDSSMRQQLREGLVMHLQSISQNGHIDL.

This sequence belongs to the TPP enzyme family. MenD subfamily. In terms of assembly, homodimer. Requires Mg(2+) as cofactor. Mn(2+) serves as cofactor. It depends on thiamine diphosphate as a cofactor.

It carries out the reaction isochorismate + 2-oxoglutarate + H(+) = 5-enolpyruvoyl-6-hydroxy-2-succinyl-cyclohex-3-ene-1-carboxylate + CO2. Its pathway is quinol/quinone metabolism; 1,4-dihydroxy-2-naphthoate biosynthesis; 1,4-dihydroxy-2-naphthoate from chorismate: step 2/7. It functions in the pathway cofactor biosynthesis; phylloquinone biosynthesis. In terms of biological role, catalyzes the thiamine diphosphate-dependent decarboxylation of 2-oxoglutarate and the subsequent addition of the resulting succinic semialdehyde-thiamine pyrophosphate anion to isochorismate to yield 2-succinyl-5-enolpyruvyl-6-hydroxy-3-cyclohexene-1-carboxylate (SEPHCHC). In Prochlorococcus marinus (strain MIT 9303), this protein is 2-succinyl-5-enolpyruvyl-6-hydroxy-3-cyclohexene-1-carboxylate synthase.